A 278-amino-acid polypeptide reads, in one-letter code: 4-deoxy-L-threo-5-hexosulose-uronate ketol-isomerase (278 aa).

Zn(2+) is bound by residues histidine 196, histidine 198, glutamate 203, and histidine 245.

This sequence belongs to the KduI family. It depends on Zn(2+) as a cofactor.

It carries out the reaction 5-dehydro-4-deoxy-D-glucuronate = 3-deoxy-D-glycero-2,5-hexodiulosonate. Its pathway is glycan metabolism; pectin degradation; 2-dehydro-3-deoxy-D-gluconate from pectin: step 4/5. Functionally, catalyzes the isomerization of 5-dehydro-4-deoxy-D-glucuronate to 3-deoxy-D-glycero-2,5-hexodiulosonate. The chain is 4-deoxy-L-threo-5-hexosulose-uronate ketol-isomerase from Yersinia enterocolitica serotype O:8 / biotype 1B (strain NCTC 13174 / 8081).